We begin with the raw amino-acid sequence, 24 residues long: Ranatuerin-4 (24 aa).

A disulfide bridge connects residues Cys18 and Cys24.

The protein belongs to the frog skin active peptide (FSAP) family. Ranatuerin subfamily. In terms of tissue distribution, expressed by the skin glands.

The protein localises to the secreted. Functionally, antibacterial activity against Gram-positive bacterium S.aureus (MIC=55 uM). Shows no detectable hemolytic activity towards human erythrocytes. The polypeptide is Ranatuerin-4 (Aquarana catesbeiana (American bullfrog)).